Here is a 1178-residue protein sequence, read N- to C-terminus: DNA-directed RNA polymerase subunit beta' (1178 aa).

C60, C62, C75, and C78 together coordinate Zn(2+). The Mg(2+) site is built by D450, D452, and D454. C795, C869, C876, and C879 together coordinate Zn(2+).

This sequence belongs to the RNA polymerase beta' chain family. As to quaternary structure, the RNAP catalytic core consists of 2 alpha, 1 beta, 1 beta' and 1 omega subunit. When a sigma factor is associated with the core the holoenzyme is formed, which can initiate transcription. Mg(2+) is required as a cofactor. It depends on Zn(2+) as a cofactor.

The enzyme catalyses RNA(n) + a ribonucleoside 5'-triphosphate = RNA(n+1) + diphosphate. DNA-dependent RNA polymerase catalyzes the transcription of DNA into RNA using the four ribonucleoside triphosphates as substrates. In Clostridium botulinum (strain ATCC 19397 / Type A), this protein is DNA-directed RNA polymerase subunit beta'.